The sequence spans 368 residues: MIPGTDAYDIAIEISDADIERLLSVMPEDVEAASALSYCRNVFLPLTTACRYTCTYCTYYDPPGQAELMDREEIRETCRRGADAGCTEALFTFGDDPDDRYTAVHDQLAEWGHDSIHEYLREACEIALEEGLLPHANPGDQTREQMAHVADLNASMGVMLETTTEVQAHGGPRAKNPGQRLNTLRVAGELGVPFTTGILVGIGEDWHHRAESLLAIREMHERYGHIQEVIIQPVVENERWQGGSPDLATMRRVTAMARAALPEEVSVQVPPNLAPARDLTDCGIDDLGGVSPVTVDHINPEYEWPALQELTAVAEAAEVPLSERLPVYDHFVDDGWLSAPIEAAIEADNDAGDRFRSILDRGVNPVTL.

Residues 36 to 272 (LSYCRNVFLP…EEVSVQVPPN (237 aa)) enclose the Radical SAM core domain. [4Fe-4S] cluster is bound by residues cysteine 50, cysteine 54, and cysteine 57.

Belongs to the radical SAM superfamily. CofG family. Consists of two subunits, CofG and CofH. Requires [4Fe-4S] cluster as cofactor.

It carries out the reaction 5-amino-5-(4-hydroxybenzyl)-6-(D-ribitylimino)-5,6-dihydrouracil + S-adenosyl-L-methionine = 7,8-didemethyl-8-hydroxy-5-deazariboflavin + 5'-deoxyadenosine + L-methionine + NH4(+) + H(+). Its pathway is cofactor biosynthesis; coenzyme F0 biosynthesis. Catalyzes the radical-mediated synthesis of 7,8-didemethyl-8-hydroxy-5-deazariboflavin from 5-amino-5-(4-hydroxybenzyl)-6-(D-ribitylimino)-5,6-dihydrouracil. The polypeptide is 7,8-didemethyl-8-hydroxy-5-deazariboflavin synthase (Haloarcula marismortui (strain ATCC 43049 / DSM 3752 / JCM 8966 / VKM B-1809) (Halobacterium marismortui)).